A 422-amino-acid polypeptide reads, in one-letter code: L-threonine dehydratase biosynthetic IlvA (422 aa).

The residue at position 56 (Lys56) is an N6-(pyridoxal phosphate)lysine. Pyridoxal 5'-phosphate contacts are provided by residues Asn83, 189–193, and Ser315; that span reads GGGGL. The region spanning 339-413 is the ACT-like domain; that stretch reads HYFILNFPQR…FDPSNIYINE (75 aa).

Belongs to the serine/threonine dehydratase family. Homotetramer. Pyridoxal 5'-phosphate serves as cofactor.

The enzyme catalyses L-threonine = 2-oxobutanoate + NH4(+). The protein operates within amino-acid biosynthesis; L-isoleucine biosynthesis; 2-oxobutanoate from L-threonine: step 1/1. Catalyzes the anaerobic formation of alpha-ketobutyrate and ammonia from threonine in a two-step reaction. The first step involved a dehydration of threonine and a production of enamine intermediates (aminocrotonate), which tautomerizes to its imine form (iminobutyrate). Both intermediates are unstable and short-lived. The second step is the nonenzymatic hydrolysis of the enamine/imine intermediates to form 2-ketobutyrate and free ammonia. In the low water environment of the cell, the second step is accelerated by RidA. This Staphylococcus aureus (strain MSSA476) protein is L-threonine dehydratase biosynthetic IlvA (ilvA).